We begin with the raw amino-acid sequence, 170 residues long: Peptide deformylase 1 (170 aa).

The Fe cation site is built by C92 and H135. E136 is a catalytic residue. H139 contacts Fe cation.

This sequence belongs to the polypeptide deformylase family. Fe(2+) is required as a cofactor.

The catalysed reaction is N-terminal N-formyl-L-methionyl-[peptide] + H2O = N-terminal L-methionyl-[peptide] + formate. In terms of biological role, removes the formyl group from the N-terminal Met of newly synthesized proteins. Requires at least a dipeptide for an efficient rate of reaction. N-terminal L-methionine is a prerequisite for activity but the enzyme has broad specificity at other positions. The polypeptide is Peptide deformylase 1 (Coxiella burnetii (strain RSA 493 / Nine Mile phase I)).